A 477-amino-acid chain; its full sequence is Bifunctional protein HldE (477 aa).

Residues 1–318 (MKVTLPDFRR…ENAIRGRADT (318 aa)) form a ribokinase region. 195-198 (NLSE) is a binding site for ATP. Residue Asp264 is part of the active site. Residues 344-477 (MTNGVFDILH…INIIRQGQND (134 aa)) are cytidylyltransferase.

In the N-terminal section; belongs to the carbohydrate kinase PfkB family. The protein in the C-terminal section; belongs to the cytidylyltransferase family. Homodimer.

The catalysed reaction is D-glycero-beta-D-manno-heptose 7-phosphate + ATP = D-glycero-beta-D-manno-heptose 1,7-bisphosphate + ADP + H(+). It carries out the reaction D-glycero-beta-D-manno-heptose 1-phosphate + ATP + H(+) = ADP-D-glycero-beta-D-manno-heptose + diphosphate. It participates in nucleotide-sugar biosynthesis; ADP-L-glycero-beta-D-manno-heptose biosynthesis; ADP-L-glycero-beta-D-manno-heptose from D-glycero-beta-D-manno-heptose 7-phosphate: step 1/4. It functions in the pathway nucleotide-sugar biosynthesis; ADP-L-glycero-beta-D-manno-heptose biosynthesis; ADP-L-glycero-beta-D-manno-heptose from D-glycero-beta-D-manno-heptose 7-phosphate: step 3/4. Functionally, catalyzes the phosphorylation of D-glycero-D-manno-heptose 7-phosphate at the C-1 position to selectively form D-glycero-beta-D-manno-heptose-1,7-bisphosphate. Its function is as follows. Catalyzes the ADP transfer from ATP to D-glycero-beta-D-manno-heptose 1-phosphate, yielding ADP-D-glycero-beta-D-manno-heptose. The protein is Bifunctional protein HldE of Edwardsiella ictaluri (strain 93-146).